Here is a 607-residue protein sequence, read N- to C-terminus: UvrABC system protein C (607 aa).

The region spanning 16 to 94 (GRPGVYRMFD…IKEWRPPYNI (79 aa)) is the GIY-YIG domain. One can recognise a UVR domain in the interval 203-238 (NALSDELNATMEKAAMALDFERAAELRDQVALLRRV).

This sequence belongs to the UvrC family. Interacts with UvrB in an incision complex.

It is found in the cytoplasm. The UvrABC repair system catalyzes the recognition and processing of DNA lesions. UvrC both incises the 5' and 3' sides of the lesion. The N-terminal half is responsible for the 3' incision and the C-terminal half is responsible for the 5' incision. The protein is UvrABC system protein C of Pseudomonas savastanoi pv. phaseolicola (strain 1448A / Race 6) (Pseudomonas syringae pv. phaseolicola (strain 1448A / Race 6)).